Here is a 195-residue protein sequence, read N- to C-terminus: UPF0301 protein Bpro_1142 (195 aa).

Belongs to the UPF0301 (AlgH) family.

This is UPF0301 protein Bpro_1142 from Polaromonas sp. (strain JS666 / ATCC BAA-500).